The chain runs to 387 residues: MATTKSVLVLIFMILATTSSTFATLGEMVTVLSIDGGGIKGIIPGIILEFLEGQLQKMDNNADARLADYFDVIGGTSTGGLLTAMITTPNENNRPFAAAKDIVPFYFQHGPHIFNSSTGQFFGPKYDGKYLMQVLQEKLGETRVHQALTEVAISSFDIKTNKPVIFTKSNLAKSPELDAKMSDICYSTAAAPTYFPPHYFATNTSNGDKYEFNLVDGAVATVADPALLSVSVATRRAEEDPAFASIRSLNYKQLLLLSLGTGTNSEFDKTHTAQETAKWGALQWMLVIQQMTEAASSYMTDYYLSTVFQDLHSQNNYLRVQENALTGTTTKADDASEANMELLVQVGENLLKKPVSKDNPETYEEALKRFAKLLSDRKKFRANKASY.

The signal sequence occupies residues 1–23 (MATTKSVLVLIFMILATTSSTFA). The region spanning 32–230 (LSIDGGGIKG…TVADPALLSV (199 aa)) is the PNPLA domain. The GXGXXG signature appears at 36-41 (GGGIKG). The GXSXG signature appears at 75-79 (GTSTG). Catalysis depends on Ser77, which acts as the Nucleophile. Asn115 and Asn203 each carry an N-linked (GlcNAc...) asparagine glycan. Asp216 (proton acceptor) is an active-site residue. A DGA/G motif is present at residues 216-218 (DGA).

Belongs to the patatin family. In terms of tissue distribution, tuber.

It localises to the vacuole. Functionally, probable lipolytic acyl hydrolase (LAH), an activity which is thought to be involved in the response of tubers to pathogens. The polypeptide is Patatin-05 (pat1-k1) (Solanum tuberosum (Potato)).